The sequence spans 194 residues: Lipoprotein signal peptidase (194 aa).

The next 2 helical transmembrane spans lie at Thr-75–Ser-95 and Thr-97–Asp-117. Catalysis depends on residues Asp-126 and Asp-144. Residues Tyr-135–Met-155 traverse the membrane as a helical segment.

It belongs to the peptidase A8 family.

It is found in the cell inner membrane. The enzyme catalyses Release of signal peptides from bacterial membrane prolipoproteins. Hydrolyzes -Xaa-Yaa-Zaa-|-(S,diacylglyceryl)Cys-, in which Xaa is hydrophobic (preferably Leu), and Yaa (Ala or Ser) and Zaa (Gly or Ala) have small, neutral side chains.. Its pathway is protein modification; lipoprotein biosynthesis (signal peptide cleavage). In terms of biological role, this protein specifically catalyzes the removal of signal peptides from prolipoproteins. The protein is Lipoprotein signal peptidase of Rickettsia prowazekii (strain Madrid E).